Reading from the N-terminus, the 355-residue chain is Methylxanthine N3-demethylase NdmB (355 aa).

A Rieske domain is found at Trp19–Val131. Residues Cys64, His66, Cys87, and His90 each coordinate [2Fe-2S] cluster.

The cofactor is [2Fe-2S] cluster.

The catalysed reaction is theobromine + NADH + O2 + H(+) = 7-methylxanthine + formaldehyde + NAD(+) + H2O. It catalyses the reaction theobromine + NADPH + O2 + H(+) = 7-methylxanthine + formaldehyde + NADP(+) + H2O. It carries out the reaction 3-methylxanthine + NADH + O2 + H(+) = xanthine + formaldehyde + NAD(+) + H2O. The enzyme catalyses 3-methylxanthine + NADPH + O2 + H(+) = xanthine + formaldehyde + NADP(+) + H2O. Functionally, involved in the caffeine degradation, which is the essential first step for assimilating the carbon and nitrogen in caffeine. Catalyzes the N3-demethylation of theobromine to produce 7-methylxanthine and formaldehyde. Also catalyzes the N3-demethylation of 3-methylxanthine, caffeine, and theophylline to xanthine, paraxanthine, and 1-methylxanthine, respectively. NADH is the preferred substrate. The chain is Methylxanthine N3-demethylase NdmB (ndmB) from Pseudomonas putida (Arthrobacter siderocapsulatus).